The sequence spans 103 residues: Transcription factor S (103 aa).

Zn(2+) is bound by residues Cys4, Cys7, Cys20, Cys23, Cys64, Cys67, Cys92, and Cys95. The segment at 4–23 (CPKCKSLMIYQGDKLVCRKC) adopts a C4-type zinc-finger fold. The TFIIS-type zinc-finger motif lies at 60 to 100 (TKAICPACGHNEAFWWLRQLRAADESEVRFFRCTKCGKTWR).

Belongs to the archaeal RpoM/eukaryotic RPA12/RPB9/RPC11 RNA polymerase family.

Its function is as follows. Induces RNA cleavage activity in the RNA polymerase. In its presence, the cleavage activity of the RNA polymerase truncates the RNA back to position +15 in a stepwise manner by releasing mainly dinucleotides from the 3'-end of the nascent RNA. The truncated RNAs are able to continue elongation. Involved in transcriptional proofreading and fidelity. Misincorporation of nucleotides during elongation of transcription leads to arrested elongation complexes which are rescued by TFS-promoted removal of a dinucleotide from the 3'-end. TFS is able to induce a cleavage resynthesis cycle in stalled elongation complexes (resulting from the next missing nucleotide or a reduced incorporation rate of a wrong nucleotide) preventing misincorporation and enabling proofreading in a post-incorporation manner. Pausing of elongation complexes is the main determinant of TFS-induced RNA cleavage. This Archaeoglobus fulgidus (strain ATCC 49558 / DSM 4304 / JCM 9628 / NBRC 100126 / VC-16) protein is Transcription factor S.